Here is a 159-residue protein sequence, read N- to C-terminus: CASP-like protein 5C1 (159 aa).

The Cytoplasmic portion of the chain corresponds to 1–6 (MDNGDR). The helical transmembrane segment at 7 to 29 (SGAGAGAVGSAGSLGLRVGQAVF) threads the bilayer. Over 30–48 (SSASLLFMSVGVEFFSYTA) the chain is Extracellular. The helical transmembrane segment at 49 to 69 (FCFLVTIMGLVIPWSCTLAMI) threads the bilayer. Topologically, residues 70–94 (DVYSVFVGCPLRVPGVMVIVVVGDC) are cytoplasmic. The helical transmembrane segment at 95 to 117 (ALSIVSFAAACSSAAVIDLLLQL) threads the bilayer. Over 118–134 (HGSHSSPTFCGRYQLSA) the chain is Extracellular. Residues 135 to 155 (MMAFLSWLLMAASATFNLWFV) form a helical membrane-spanning segment. Residues 156–159 (ASRW) lie on the Cytoplasmic side of the membrane.

Belongs to the Casparian strip membrane proteins (CASP) family. Homodimer and heterodimers.

It is found in the cell membrane. The chain is CASP-like protein 5C1 from Zea mays (Maize).